The chain runs to 547 residues: MTRYVFITGGVVSSLGKGIASASLAAILEARGLKVTLLKLDPYINVDPGTMSPFQHGEVFVTEDGAETDLDLGHYERFVRIKTGRRNNFTTGQIYENVIRKERRGDYLGGTVQVIPHITDEIKRSIRAGAEGADIALVEIGGTVGDIESLPFLEAIRQMGVEMGHENALFIHLTLVPYIAAAGEIKTKPTQHSVKELRSIGIQPDVLLCRANQPLPEGERRKIALFTNVEERAVISAVDVDNIYKIPLWLHSQKLDEIVLRKLHIDAPPADLSDWKHVVNAMEFPEAEVTVGMVGKYVDLTESYKSLNEALTHAGIHTGTKVTIRYLDSEKLETEGAGCLEDLDAILVPGGFGERGVEGKIAAVRYARENGIPYLGICLGMQVAVIEFARHVAGLEGAHSTEFRPNTPHPVIALITEWKDREGRIEQRSADSDLGGTMRLGGQVCQLTPGTLAHQCYGSDHITERHRHRYEFNNGYLETLTAAGLVISGRSEDGSLVEVVELKDHPWFLGCQFHPEFTSTPRDGHPLFSGFIRAARAQHEKTQTKSD.

Residues 1-265 form an amidoligase domain region; the sequence is MTRYVFITGG…DEIVLRKLHI (265 aa). Residue Ser13 coordinates CTP. A UTP-binding site is contributed by Ser13. ATP-binding positions include 14–19 and Asp71; that span reads SLGKGI. Asp71 and Glu139 together coordinate Mg(2+). Residues 146-148, 186-191, and Lys222 each bind CTP; these read DIE and KTKPTQ. UTP-binding positions include 186–191 and Lys222; that span reads KTKPTQ. The Glutamine amidotransferase type-1 domain occupies 290-541; that stretch reads TVGMVGKYVD…IRAARAQHEK (252 aa). Residue Gly351 coordinates L-glutamine. Cys378 serves as the catalytic Nucleophile; for glutamine hydrolysis. Residues 379 to 382, Glu402, and Arg469 contribute to the L-glutamine site; that span reads LGMQ. Active-site residues include His514 and Glu516.

The protein belongs to the CTP synthase family. As to quaternary structure, homotetramer.

It carries out the reaction UTP + L-glutamine + ATP + H2O = CTP + L-glutamate + ADP + phosphate + 2 H(+). It catalyses the reaction L-glutamine + H2O = L-glutamate + NH4(+). The catalysed reaction is UTP + NH4(+) + ATP = CTP + ADP + phosphate + 2 H(+). It functions in the pathway pyrimidine metabolism; CTP biosynthesis via de novo pathway; CTP from UDP: step 2/2. Its activity is regulated as follows. Allosterically activated by GTP, when glutamine is the substrate; GTP has no effect on the reaction when ammonia is the substrate. The allosteric effector GTP functions by stabilizing the protein conformation that binds the tetrahedral intermediate(s) formed during glutamine hydrolysis. Inhibited by the product CTP, via allosteric rather than competitive inhibition. Functionally, catalyzes the ATP-dependent amination of UTP to CTP with either L-glutamine or ammonia as the source of nitrogen. Regulates intracellular CTP levels through interactions with the four ribonucleotide triphosphates. In Thioalkalivibrio sulfidiphilus (strain HL-EbGR7), this protein is CTP synthase.